The sequence spans 126 residues: Defensin-like protein 183 (126 aa).

A signal peptide spans 1–26 (MEKALSLVVFIIFSIMLASVENKVNA). 8 cysteine pairs are disulfide-bonded: Cys29-Cys68, Cys36-Cys55, Cys39-Cys62, Cys43-Cys64, Cys80-Cys126, Cys91-Cys111, Cys96-Cys120, and Cys100-Cys122.

Belongs to the DEFL family.

It localises to the secreted. The protein is Defensin-like protein 183 (LCR19) of Arabidopsis thaliana (Mouse-ear cress).